The chain runs to 148 residues: 3-dehydroquinate dehydratase (148 aa).

The active-site Proton acceptor is the tyrosine 23. Positions 75, 81, and 88 each coordinate substrate. Histidine 101 acts as the Proton donor in catalysis. Substrate contacts are provided by residues 102-103 (LS) and arginine 112.

Belongs to the type-II 3-dehydroquinase family. Homododecamer.

It catalyses the reaction 3-dehydroquinate = 3-dehydroshikimate + H2O. It participates in metabolic intermediate biosynthesis; chorismate biosynthesis; chorismate from D-erythrose 4-phosphate and phosphoenolpyruvate: step 3/7. Its function is as follows. Catalyzes a trans-dehydration via an enolate intermediate. The polypeptide is 3-dehydroquinate dehydratase (Xanthomonas campestris pv. campestris (strain 8004)).